The sequence spans 131 residues: Fluoride-specific ion channel FluC 2 (131 aa).

A run of 4 helical transmembrane segments spans residues 4–24 (IIQGLLFVALGSVFGGMARFW), 46–66 (VSGAFAIGVFGALAASGHGVF), 71–91 (PWLFAVTGFLGCYTTVSSFAL), and 105–125 (AISNVTFSLVFCLIAVALGFA). G81 and T84 together coordinate Na(+).

It belongs to the fluoride channel Fluc/FEX (TC 1.A.43) family.

The protein localises to the cell inner membrane. The enzyme catalyses fluoride(in) = fluoride(out). Na(+) is not transported, but it plays an essential structural role and its presence is essential for fluoride channel function. Fluoride-specific ion channel. Important for reducing fluoride concentration in the cell, thus reducing its toxicity. This chain is Fluoride-specific ion channel FluC 2, found in Rhodopseudomonas palustris (strain BisB18).